Reading from the N-terminus, the 438-residue chain is POU domain, class 3, transcription factor 3-A (438 aa).

Disordered stretches follow at residues 22–43 (VHSE…SVSG), 102–172 (SPWS…QSQQ), and 186–248 (GMLN…PTSD). Composition is skewed to polar residues over residues 103–123 (PWSS…VKSS) and 146–159 (QSHQ…TASH). The segment covering 160 to 172 (ISTITGGQQQSQQ) has biased composition (low complexity). Residues 210-230 (HHHHHHHQQQHPHHHHHHQHH) are compositionally biased toward basic residues. Positions 242 to 316 (EDTPTSDDLE…LLNKWLEEAD (75 aa)) constitute a POU-specific domain. The segment at residues 334–393 (KRKKRTSIEVSVKGALESHFLKCPKPSAQEITSLADNLQLEKEVVRVWFCNRRQKEKRMT) is a DNA-binding region (homeobox).

This sequence belongs to the POU transcription factor family. Class-3 subfamily. Predominantly expressed in the embryonic and adult central nervous system. In adults, isoform 2 is expressed in the brain, ovary, basal cells of the skin and muscle satellite cells.

Its subcellular location is the nucleus. Its function is as follows. Transcription factor that may play important roles in patterning the embryonic brain. This is POU domain, class 3, transcription factor 3-A (pou3f3a) from Danio rerio (Zebrafish).